A 111-amino-acid polypeptide reads, in one-letter code: Nucleoid-associated protein PputGB1_3833 (111 aa).

Disordered regions lie at residues 1–25 (MMKGGMAGLMKQAQQMQEKMQKMQE) and 87–111 (EQSSQEKMGGMTAGMQLPPGFKMPF).

This sequence belongs to the YbaB/EbfC family. In terms of assembly, homodimer.

It is found in the cytoplasm. The protein localises to the nucleoid. In terms of biological role, binds to DNA and alters its conformation. May be involved in regulation of gene expression, nucleoid organization and DNA protection. In Pseudomonas putida (strain GB-1), this protein is Nucleoid-associated protein PputGB1_3833.